A 528-amino-acid polypeptide reads, in one-letter code: Na(+)/H(+) antiporter NhaB (528 aa).

A run of 11 helical transmembrane segments spans residues 29–49 (LIINPIVFYINPFVAGWLLVI), 52–72 (IFTLAMALKCYPLQPGGLLAI), 95–115 (VLLLLVFMVAGIYFMKQLLLF), 139–159 (AFLSAFLDALTVIAVIIAVAV), 203–223 (LLMHAGVGTALGGVCTMVGEP), 248–268 (VPVFFAGIFTCFLVEKFKIFG), 304–324 (AFIGIWLIVGLALHLASVGLI), 349–369 (EEALPFTALLAVFFAVVAVII), 390–410 (LVIFYIANGLLSMVSDNVFVG), 448–468 (ATPNGQAAFLFLLTSAIAPLI), and 476–496 (VWMALPYTIVLSIVGVLAIEL).

It belongs to the NhaB Na(+)/H(+) (TC 2.A.34) antiporter family.

Its subcellular location is the cell inner membrane. The enzyme catalyses 2 Na(+)(in) + 3 H(+)(out) = 2 Na(+)(out) + 3 H(+)(in). In terms of biological role, na(+)/H(+) antiporter that extrudes sodium in exchange for external protons. The protein is Na(+)/H(+) antiporter NhaB of Shewanella woodyi (strain ATCC 51908 / MS32).